Here is a 160-residue protein sequence, read N- to C-terminus: Putative pre-16S rRNA nuclease (160 aa).

This sequence belongs to the YqgF nuclease family.

The protein resides in the cytoplasm. Its function is as follows. Could be a nuclease involved in processing of the 5'-end of pre-16S rRNA. In Cereibacter sphaeroides (strain KD131 / KCTC 12085) (Rhodobacter sphaeroides), this protein is Putative pre-16S rRNA nuclease.